The following is a 122-amino-acid chain: T cell receptor gamma variable 9 (122 aa).

Positions 1 to 20 (MLSLLHTSTLAVLGALCVYG) are cleaved as a signal peptide. The Ig-like domain maps to 27–122 (PQISSTKTLS…ATYYCALWEV (96 aa)). Cysteines 43 and 117 form a disulfide.

In terms of assembly, gamma-delta TR is a heterodimer composed of a gamma and delta chain; disulfide-linked. The gamma-delta TR is associated with the transmembrane signaling CD3 coreceptor proteins following the stoichiometry: a single gamma-delta TR heterodimer associates with one CD3D-CD3E heterodimer, one CD3G-CD3E heterodimer and one CD247 homodimer forming a stable octameric structure. Upon activation, gamma-delta TR complex associates with FCER1G to initiate intracellular signaling.

The protein localises to the cell membrane. V region of the variable domain of T cell receptor (TR) gamma chain that participates in the antigen recognition. Gamma-delta TRs recognize a variety of self and foreign non-peptide antigens frequently expressed at the epithelial boundaries between the host and external environment, including endogenous lipids presented by MH-like protein CD1D and phosphoantigens presented by butyrophilin-like molecule BTN3A1. Upon antigen recognition induces rapid, innate-like immune responses involved in pathogen clearance and tissue repair. Binding of gamma-delta TR complex to antigen triggers phosphorylation of immunoreceptor tyrosine-based activation motifs (ITAMs) in the CD3 chains by the LCK and FYN kinases, allowing the recruitment, phosphorylation, and activation of ZAP70 that facilitates phosphorylation of the scaffolding proteins LCP2 and LAT. This lead to the formation of a supramolecular signalosome that recruits the phospholipase PLCG1, resulting in calcium mobilization and ERK activation, ultimately leading to T cell expansion and differentiation into effector cells. Gamma-delta TRs are produced through somatic rearrangement of a limited repertoire of variable (V), diversity (D), and joining (J) genes. The potential diversity of gamma-delta TRs is conferred by the unique ability to rearrange (D) genes in tandem and to utilize all three reading frames. The combinatorial diversity is considerably increased by the sequence exonuclease trimming and random nucleotide (N) region additions which occur during the V-(D)-J rearrangements. The sequence is that of T cell receptor gamma variable 9 from Homo sapiens (Human).